We begin with the raw amino-acid sequence, 147 residues long: UPF0735 ACT domain-containing protein Cthe_1377 (147 aa).

An ACT domain is found at 71-146 (TLFFTVEDYA…GVKRQEILAR (76 aa)).

This sequence belongs to the UPF0735 family.

This is UPF0735 ACT domain-containing protein Cthe_1377 from Acetivibrio thermocellus (strain ATCC 27405 / DSM 1237 / JCM 9322 / NBRC 103400 / NCIMB 10682 / NRRL B-4536 / VPI 7372) (Clostridium thermocellum).